Consider the following 385-residue polypeptide: 3-hydroxyisobutyryl-CoA hydrolase, mitochondrial (385 aa).

Residues Glu-120, Gly-145, Glu-168, and Asp-176 each contribute to the substrate site.

The protein belongs to the enoyl-CoA hydratase/isomerase family.

It localises to the mitochondrion. It catalyses the reaction 3-hydroxy-2-methylpropanoyl-CoA + H2O = 3-hydroxy-2-methylpropanoate + CoA + H(+). It participates in amino-acid degradation; L-valine degradation. In terms of biological role, hydrolyzes 3-hydroxyisobutyryl-CoA (HIBYL-CoA), a saline catabolite. Has high activity toward isobutyryl-CoA. Could be an isobutyryl-CoA dehydrogenase that functions in valine catabolism. Also hydrolyzes 3-hydroxypropanoyl-CoA. The sequence is that of 3-hydroxyisobutyryl-CoA hydrolase, mitochondrial (hibch) from Xenopus tropicalis (Western clawed frog).